Reading from the N-terminus, the 278-residue chain is Biotin synthase (278 aa).

One can recognise a Radical SAM core domain in the interval 1–227 (MQIMLCAISN…QSVVMVAGGR (227 aa)). 3 residues coordinate [4Fe-4S] cluster: C16, C20, and C23. Positions 60, 95, and 153 each coordinate [2Fe-2S] cluster.

This sequence belongs to the radical SAM superfamily. Biotin synthase family. As to quaternary structure, homodimer. Requires [4Fe-4S] cluster as cofactor. [2Fe-2S] cluster serves as cofactor.

It catalyses the reaction (4R,5S)-dethiobiotin + (sulfur carrier)-SH + 2 reduced [2Fe-2S]-[ferredoxin] + 2 S-adenosyl-L-methionine = (sulfur carrier)-H + biotin + 2 5'-deoxyadenosine + 2 L-methionine + 2 oxidized [2Fe-2S]-[ferredoxin]. It functions in the pathway cofactor biosynthesis; biotin biosynthesis; biotin from 7,8-diaminononanoate: step 2/2. Catalyzes the conversion of dethiobiotin (DTB) to biotin by the insertion of a sulfur atom into dethiobiotin via a radical-based mechanism. In Campylobacter jejuni subsp. doylei (strain ATCC BAA-1458 / RM4099 / 269.97), this protein is Biotin synthase.